We begin with the raw amino-acid sequence, 86 residues long: Small ribosomal subunit protein bS20 (86 aa).

A disordered region spans residues 1-25 (MANIKSQIKRIRTNEKARQRNKAYK). Positions 12-25 (RTNEKARQRNKAYK) are enriched in basic and acidic residues.

Belongs to the bacterial ribosomal protein bS20 family.

Functionally, binds directly to 16S ribosomal RNA. The sequence is that of Small ribosomal subunit protein bS20 from Beutenbergia cavernae (strain ATCC BAA-8 / DSM 12333 / CCUG 43141 / JCM 11478 / NBRC 16432 / NCIMB 13614 / HKI 0122).